The sequence spans 215 residues: Protein C' (215 aa).

The segment at 12–34 is disordered; it reads MPSFLKKILKLRGRRQEDESRSR. Residues 15–22 form an involved in self-degradation and in host STAT1 degradation region; that stretch reads FLKKILKL. Residues 25–35 show a composition bias toward basic and acidic residues; the sequence is RRQEDESRSRM. Over residues 36 to 66 the composition is skewed to polar residues; it reads LSDSSTQSYQVNQLTSEETEAGSTIPSTPSK.

It belongs to the respirovirus protein C family. The different isoforms interact (via C-terminus) with unphosphorylated and phosphorylated human STAT1 (via N-terminus), favoring the formation of parallel STAT1 homodimers. The different isoforms do not interact with host STAT2. C protein interacts with L protein; this interaction has an inhibitory effect on viral transcription and replication. In terms of processing, protein Y1 is produced not only by alternative initiation, but also by proteolytic cleavage of C'. Only alternative initiation is detected in vitro, whereas in vivo cleavage seems to be predominant.

It is found in the host cytoplasm. Its function is as follows. The different products prevent the establishment of cellular antiviral state by blocking the interferon-alpha/beta (IFN-alpha/beta) and IFN-gamma signaling pathways. They inhibit IFN-alpha/beta induced tyrosine phosphorylation of STAT1 and STAT2. Blocking the IFN-alpha/beta pathway requires binding to STAT1 in the cytoplasm. They inhibit IFN-gamma induced serine phosphorylation of STAT1. Block the IFN-gamma pathway by binding to and stabilizing the parallel form of the STAT1 dimer, further inducing high-molecular-weight complex formation and inhibition of transcription by IFN-gamma. May also have a role in preventing the cell to enter apoptosis. Modulate regulation of viral transcription and replication. Overexpression inhibits the viral RNA polymerase. The absence of all C', C and Y1 proteins leads to viral delayed growth. Plays an important role in virion particles release. Modulates virion shape. The sequence is that of Protein C' (P/V/C) from Cavia cutleri (Guinea pig).